Here is a 155-residue protein sequence, read N- to C-terminus: Transcriptional repressor NrdR (155 aa).

The segment at 3–34 is a zinc-finger region; it reads CPFCGNIDTQVKDSRPAEDHVSIRRRRFCPAC. The 91-residue stretch at 49-139 folds into the ATP-cone domain; it reads LVVIKSTGKR…VYKNFQAADD (91 aa).

The protein belongs to the NrdR family. Zn(2+) is required as a cofactor.

Negatively regulates transcription of bacterial ribonucleotide reductase nrd genes and operons by binding to NrdR-boxes. This is Transcriptional repressor NrdR from Roseobacter denitrificans (strain ATCC 33942 / OCh 114) (Erythrobacter sp. (strain OCh 114)).